The chain runs to 632 residues: ATP-dependent DNA helicase RecQ (632 aa).

One can recognise a Helicase ATP-binding domain in the interval 47–215; it reads IDATLMGKDS…LRHLNLQSPH (169 aa). 60–67 is an ATP binding site; that stretch reads MATGNGKS. Residues 159–162 carry the DEAH box motif; that stretch reads DEAH. In terms of domain architecture, Helicase C-terminal spans 236-385; it reads PMEQLCRFVL…IEALKLQAIG (150 aa). The Zn(2+) site is built by cysteine 393, cysteine 410, cysteine 413, and cysteine 416. Residues 544–624 form the HRDC domain; it reads AQYDKDLFAR…QQHKKVLTQH (81 aa).

Belongs to the helicase family. RecQ subfamily. Mg(2+) is required as a cofactor. Zn(2+) serves as cofactor.

It catalyses the reaction Couples ATP hydrolysis with the unwinding of duplex DNA by translocating in the 3'-5' direction.. The catalysed reaction is ATP + H2O = ADP + phosphate + H(+). In terms of biological role, an ATP-dependent DNA helicase which unwinds DNA in a 3'-5' direction. Plays a role in recombination. The chain is ATP-dependent DNA helicase RecQ from Pasteurella multocida (strain Pm70).